A 196-amino-acid polypeptide reads, in one-letter code: Ribosome maturation factor RimP (196 aa).

The segment at 164–196 (LAPQKPNKPGPKKPGHDKKKPSNEPAAGKPRAE) is disordered. Positions 173–182 (GPKKPGHDKK) are enriched in basic residues.

It belongs to the RimP family.

The protein resides in the cytoplasm. In terms of biological role, required for maturation of 30S ribosomal subunits. The sequence is that of Ribosome maturation factor RimP from Xanthomonas campestris pv. campestris (strain 8004).